The chain runs to 197 residues: Probable low-affinity putrescine importer PlaP (197 aa).

The next 5 helical transmembrane spans lie at Gly33–Val53, Val85–Ala105, Ile107–Trp127, Phe140–Leu160, and Ser163–Thr183.

The protein belongs to the amino acid-polyamine-organocation (APC) superfamily.

The protein resides in the cell inner membrane. The enzyme catalyses putrescine(in) + H(+)(in) = putrescine(out) + H(+)(out). Functionally, putrescine importer. The sequence is that of Probable low-affinity putrescine importer PlaP (plaP) from Klebsiella pneumoniae.